Reading from the N-terminus, the 276-residue chain is Cell division protein FtsQ (276 aa).

At 1-27 (MSQAALNTRNSEEEVSSRRNNGTRLAG) the chain is on the cytoplasmic side. The helical transmembrane segment at 28–48 (ILFLLTVLTTVLVSGWVVLGW) threads the bilayer. Over 49–276 (MEDAQRLPLS…QQNQAQAEQQ (228 aa)) the chain is Periplasmic. Residues 55–126 (LPLSKLVLTG…DELKIHLVEY (72 aa)) form the POTRA domain. A disordered region spans residues 255-276 (GWAPLPPEESTQQQNQAQAEQQ). The segment covering 266–276 (QQQNQAQAEQQ) has biased composition (low complexity).

The protein belongs to the FtsQ/DivIB family. FtsQ subfamily. Part of a complex composed of FtsB, FtsL and FtsQ. The complex can be formed before its localization to the division site. This tripartite complex can be divided further into a subcomplex of FtsB and FtsL, which forms in the absence of FtsQ. Interacts with FtsA, FtsK, FtsL, FtsB, FtsW, FtsI, FtsN, FtsX and YmgF.

The protein resides in the cell inner membrane. Its function is as follows. Essential cell division protein. May link together the upstream cell division proteins, which are predominantly cytoplasmic, with the downstream cell division proteins, which are predominantly periplasmic. May control correct divisome assembly. The sequence is that of Cell division protein FtsQ from Escherichia coli (strain K12).